The sequence spans 188 residues: uncharacterized protein (188 aa).

Residues 1 to 23 (MVRPKLAFYILPLLLAFLGSALG) form the signal peptide. An N-linked (GlcNAc...) asparagine glycan is attached at N74.

This is an uncharacterized protein from Mus musculus (Mouse).